A 773-amino-acid chain; its full sequence is Phenylalanine--tRNA ligase beta subunit (773 aa).

Positions 39–150 constitute a tRNA-binding domain; sequence LKAPDKVVVG…GKLELGRPLN (112 aa). In terms of domain architecture, B5 spans 391–467; sequence KELPIIPISI…RIIGIDNIAS (77 aa). Mg(2+) contacts are provided by Asp-445, Asp-451, Glu-454, and Glu-455. The FDX-ACB domain maps to 682–773; sequence SKFPAITRDL…TLKNLGLDLR (92 aa).

It belongs to the phenylalanyl-tRNA synthetase beta subunit family. Type 1 subfamily. In terms of assembly, tetramer of two alpha and two beta subunits. Mg(2+) is required as a cofactor.

The protein resides in the cytoplasm. It carries out the reaction tRNA(Phe) + L-phenylalanine + ATP = L-phenylalanyl-tRNA(Phe) + AMP + diphosphate + H(+). The polypeptide is Phenylalanine--tRNA ligase beta subunit (Campylobacter jejuni (strain RM1221)).